A 519-amino-acid chain; its full sequence is Matrix metalloproteinase-B (519 aa).

A signal peptide spans 1-26 (MTKWSPNGNPLSTIYLILSLFTLAHT). A propeptide spans 27–126 (APTTQHSRTT…RQEQTKRTKR (100 aa)) (activation peptide). Residues 29–39 (TTQHSRTTTQL) are compositionally biased toward polar residues. The segment at 29–50 (TTQHSRTTTQLRLEDEDGGGGV) is disordered. A Cysteine switch motif is present at residues 109–116 (PRCTQTDV). Residues Cys111, His208, Asp210, His232, His247, and His276 each coordinate Zn(2+). Glu277 is an active-site residue. His280 and His286 together coordinate Zn(2+). A glycan (N-linked (GlcNAc...) asparagine) is linked at Asn341. Residues 391 to 402 (KDKRSYRGDSKI) show a composition bias toward basic and acidic residues. Residues 391 to 410 (KDKRSYRGDSKIPKCSSNNS) form a disordered region. The N-linked (GlcNAc...) asparagine glycan is linked to Asn408.

The protein belongs to the peptidase M10A family. Requires Zn(2+) as cofactor. In terms of tissue distribution, expressed in spermatheca and spermathecal-uterine valve, weakly in vulva and anal muscles and in two cells in the head (probably RMEV and RMED motor neurons).

It localises to the secreted. The protein localises to the extracellular space. The protein resides in the extracellular matrix. With respect to regulation, inhibited by human TIMP1 and TIMP2 and the broad MMP inhibitors BB94 (Batimastat) and CT543. Metalloprotease involved in molting, a process during larval stages in which a new cuticle is formed and the old cuticle is shed. Plays a role in thermotolerance probably by preventing the accumulation of oxidized lipoproteins and cholesterol. This Caenorhabditis elegans protein is Matrix metalloproteinase-B.